The primary structure comprises 515 residues: 3-[(3aS,4S,7aS)-7a-methyl-1,5-dioxo-octahydro-1H-inden-4-yl]propanoyl:CoA ligase (515 aa).

Residues 185-193, Asp398, Arg413, and Lys504 each bind ATP; that span reads TSGTTGRSK.

This sequence belongs to the ATP-dependent AMP-binding enzyme family.

It catalyses the reaction 3-[(3aS,4S,7aS)-7a-methyl-1,5-dioxo-octahydro-1H-inden-4-yl]propanoate + ATP + CoA = 3-[(3aS,4S,7aS)-7a-methyl-1,5-dioxo-octahydro-1H-inden-4-yl]propanoyl-CoA + AMP + diphosphate. Involved in the catabolism of the rings C and D of cholesterol. Catalyzes the ATP-dependent CoA thioesterification of 3aalpha-H-4alpha(3'-propanoate)-7abeta-methylhexahydro-1,5-indanedione (HIP). The chain is 3-[(3aS,4S,7aS)-7a-methyl-1,5-dioxo-octahydro-1H-inden-4-yl]propanoyl:CoA ligase from Rhodococcus jostii (strain RHA1).